The primary structure comprises 493 residues: Lysine--tRNA ligase (493 aa).

Residues E402 and E409 each contribute to the Mg(2+) site.

It belongs to the class-II aminoacyl-tRNA synthetase family. In terms of assembly, homodimer. It depends on Mg(2+) as a cofactor.

It is found in the cytoplasm. It carries out the reaction tRNA(Lys) + L-lysine + ATP = L-lysyl-tRNA(Lys) + AMP + diphosphate. This chain is Lysine--tRNA ligase, found in Ureaplasma urealyticum serovar 10 (strain ATCC 33699 / Western).